We begin with the raw amino-acid sequence, 630 residues long: Transcription factor MYC1 (630 aa).

Disordered stretches follow at residues 356–398 (FGDS…NNEE) and 430–463 (VKEAVVEPEKKPRKRGRKPANGREEPLNHVEAER). The span at 440–449 (KPRKRGRKPA) shows a compositional bias: basic residues. Residues 450–463 (NGREEPLNHVEAER) show a composition bias toward basic and acidic residues. The interval 453 to 466 (EEPLNHVEAERQRR) is basic motif; degenerate. The region spanning 453 to 502 (EEPLNHVEAERQRREKLNQRFYALRAVVPNVSKMDKASLLGDAIAYINEL) is the bHLH domain. Residues 467–502 (EKLNQRFYALRAVVPNVSKMDKASLLGDAIAYINEL) form a helix-loop-helix motif region.

Highly expressed in trichomes and at lower levels in leaves and flowers. Expressed at low levels in roots, stems, leaves, flowers and fruits.

Its subcellular location is the nucleus. Transcriptional activator that binds to the G-box motif (5'-AACGTG-3') found in a number of promoters of jasmonate-induced genes. Transcription activator involved in the transcriptional regulation of terpene biosynthesis in glandular trichomes. Binds to the promoter of the linalool synthase TPS5 and promotes TPS5 gene transactivation. Acts synergistically with EOT1 in the transactivation of TPS5. Involved in type VI glandular trichome development. Involved in the activation of terpene synthases required for volatile mono- and sesquiterpenes synthesis by the glandular cells of type VI trichomes. This is Transcription factor MYC1 from Solanum lycopersicum (Tomato).